We begin with the raw amino-acid sequence, 351 residues long: Nicotinate-nucleotide--dimethylbenzimidazole phosphoribosyltransferase (351 aa).

The Proton acceptor role is filled by glutamate 317.

This sequence belongs to the CobT family.

It catalyses the reaction 5,6-dimethylbenzimidazole + nicotinate beta-D-ribonucleotide = alpha-ribazole 5'-phosphate + nicotinate + H(+). Its pathway is nucleoside biosynthesis; alpha-ribazole biosynthesis; alpha-ribazole from 5,6-dimethylbenzimidazole: step 1/2. Its function is as follows. Catalyzes the synthesis of alpha-ribazole-5'-phosphate from nicotinate mononucleotide (NAMN) and 5,6-dimethylbenzimidazole (DMB). In Pseudomonas aeruginosa (strain ATCC 15692 / DSM 22644 / CIP 104116 / JCM 14847 / LMG 12228 / 1C / PRS 101 / PAO1), this protein is Nicotinate-nucleotide--dimethylbenzimidazole phosphoribosyltransferase.